Here is a 224-residue protein sequence, read N- to C-terminus: Glycerol-3-phosphate acyltransferase (224 aa).

Transmembrane regions (helical) follow at residues 14–34 (FFPLAATLLGYLIGSLSFAVI), 64–84 (TAAIVTLLLDAAKGWLPVMLV), 98–118 (MALVGLAAFIGHLYPVFFNFA), 127–147 (LGVLLGLSPILALATGATWLI), and 160–180 (LTAAVFVPVYYVFGDGMAWYL).

The protein belongs to the PlsY family. In terms of assembly, probably interacts with PlsX.

The protein resides in the cell inner membrane. The catalysed reaction is an acyl phosphate + sn-glycerol 3-phosphate = a 1-acyl-sn-glycero-3-phosphate + phosphate. It functions in the pathway lipid metabolism; phospholipid metabolism. Functionally, catalyzes the transfer of an acyl group from acyl-phosphate (acyl-PO(4)) to glycerol-3-phosphate (G3P) to form lysophosphatidic acid (LPA). This enzyme utilizes acyl-phosphate as fatty acyl donor, but not acyl-CoA or acyl-ACP. This chain is Glycerol-3-phosphate acyltransferase, found in Albidiferax ferrireducens (strain ATCC BAA-621 / DSM 15236 / T118) (Rhodoferax ferrireducens).